The chain runs to 312 residues: Taste receptor type 2 member 103 (312 aa).

The Extracellular segment spans residues 1-16; the sequence is MVVTMRAALRLMLIST. Residues 17–37 traverse the membrane as a helical segment; it reads VSLELIIGILANVFIALVNII. Over 38-65 the chain is Cytoplasmic; that stretch reads DWIKRGKISAVDKIYMGLAISRTAFVLS. Residues 66 to 86 traverse the membrane as a helical segment; that stretch reads VITGFLIAFLDPASLGIGIMI. Residues 87–92 lie on the Extracellular side of the membrane; the sequence is RLLTMS. The chain crosses the membrane as a helical span at residues 93 to 113; sequence WTVTNHFSVWFATCLSIFYFL. Over 114 to 133 the chain is Cytoplasmic; it reads KITNFSNTVFLALKWKVKKV. A helical membrane pass occupies residues 134–154; the sequence is VSVTLVVSLIILFINVIVIHI. Over 155–184 the chain is Extracellular; the sequence is YTDRFQVNMVQKCGANNTLRAYGLFLSIST. N170 is a glycosylation site (N-linked (GlcNAc...) asparagine). A helical membrane pass occupies residues 185–205; it reads VFTFIPFTASLTMFLLLIFSL. The Cytoplasmic segment spans residues 206–229; the sequence is WRHLKTMHHNATGSRDVSTVAHIK. Residues 230-250 traverse the membrane as a helical segment; sequence GLQTVVAFLLLYTVFAMSLFS. The Extracellular segment spans residues 251–264; sequence QSLSIDAQHTNLLS. A helical transmembrane segment spans residues 265 to 285; sequence HFLRCIGVAFPSGHSCALILG. The Cytoplasmic segment spans residues 286–312; it reads NNKLRQASLSVIFWLRCKYKHTENQGP.

Belongs to the G-protein coupled receptor T2R family.

It localises to the membrane. Gustducin-coupled receptor implicated in the perception of bitter compounds in the oral cavity and the gastrointestinal tract. Signals through PLCB2 and the calcium-regulated cation channel TRPM5. This is Taste receptor type 2 member 103 from Rattus norvegicus (Rat).